We begin with the raw amino-acid sequence, 141 residues long: HTH-type transcriptional repressor NsrR (141 aa).

The HTH rrf2-type domain maps to 2–129 (QLTSFTDYGL…DNYTLADLVE (128 aa)). The H-T-H motif DNA-binding region spans 28 to 51 (ISEVTDVYGVSRNHMVKIINQLSR). Residues Cys91, Cys96, and Cys102 each contribute to the [2Fe-2S] cluster site.

Requires [2Fe-2S] cluster as cofactor.

Nitric oxide-sensitive repressor of genes involved in protecting the cell against nitrosative stress. May require iron for activity. In Escherichia fergusonii (strain ATCC 35469 / DSM 13698 / CCUG 18766 / IAM 14443 / JCM 21226 / LMG 7866 / NBRC 102419 / NCTC 12128 / CDC 0568-73), this protein is HTH-type transcriptional repressor NsrR.